The sequence spans 276 residues: uncharacterized protein (276 aa).

Residues 20–137 (PVLIFIPGAN…PPINTFLPDS (118 aa)) enclose the AB hydrolase-1 domain. A disordered region spans residues 57-76 (GESELTEPLPDSASNPDSDY).

This sequence belongs to the AB hydrolase superfamily.

This is an uncharacterized protein from Staphylococcus aureus (strain COL).